We begin with the raw amino-acid sequence, 111 residues long: Aspartate 1-decarboxylase (111 aa).

Ser25 acts as the Schiff-base intermediate with substrate; via pyruvic acid in catalysis. Ser25 carries the pyruvic acid (Ser) modification. Thr57 is a binding site for substrate. The Proton donor role is filled by Tyr58. Position 73-75 (73-75) interacts with substrate; that stretch reads GPA.

It belongs to the PanD family. As to quaternary structure, heterooctamer of four alpha and four beta subunits. Pyruvate serves as cofactor. In terms of processing, is synthesized initially as an inactive proenzyme, which is activated by self-cleavage at a specific serine bond to produce a beta-subunit with a hydroxyl group at its C-terminus and an alpha-subunit with a pyruvoyl group at its N-terminus.

The protein localises to the cytoplasm. It carries out the reaction L-aspartate + H(+) = beta-alanine + CO2. It participates in cofactor biosynthesis; (R)-pantothenate biosynthesis; beta-alanine from L-aspartate: step 1/1. Its function is as follows. Catalyzes the pyruvoyl-dependent decarboxylation of aspartate to produce beta-alanine. The chain is Aspartate 1-decarboxylase from Coxiella burnetii (strain RSA 493 / Nine Mile phase I).